A 441-amino-acid chain; its full sequence is GTPase Der (441 aa).

EngA-type G domains lie at 2-164 (HKVA…PADD) and 173-343 (IRIS…DKWQ). GTP is bound by residues 8-15 (GRPNVGKS), 55-59 (DTGGL), 116-119 (NKID), 179-186 (GRPNVGKS), 226-230 (DTAGI), and 288-291 (NKWD).

It belongs to the TRAFAC class TrmE-Era-EngA-EngB-Septin-like GTPase superfamily. EngA (Der) GTPase family. In terms of assembly, associates with the 50S ribosomal subunit.

GTPase that plays an essential role in the late steps of ribosome biogenesis. The protein is GTPase Der of Deinococcus deserti (strain DSM 17065 / CIP 109153 / LMG 22923 / VCD115).